The following is a 131-amino-acid chain: Insertion element IS1 protein InsB (131 aa).

It belongs to the transposase 27 family.

Absolutely required for transposition of IS1. In Shigella flexneri, this protein is Insertion element IS1 protein InsB (insB1).